The following is a 314-amino-acid chain: Porphobilinogen deaminase (314 aa).

Residue cysteine 242 is modified to S-(dipyrrolylmethanemethyl)cysteine.

The protein belongs to the HMBS family. As to quaternary structure, monomer. Dipyrromethane serves as cofactor.

The enzyme catalyses 4 porphobilinogen + H2O = hydroxymethylbilane + 4 NH4(+). Its pathway is porphyrin-containing compound metabolism; protoporphyrin-IX biosynthesis; coproporphyrinogen-III from 5-aminolevulinate: step 2/4. In terms of biological role, tetrapolymerization of the monopyrrole PBG into the hydroxymethylbilane pre-uroporphyrinogen in several discrete steps. This is Porphobilinogen deaminase (hemC) from Buchnera aphidicola subsp. Acyrthosiphon pisum (strain APS) (Acyrthosiphon pisum symbiotic bacterium).